Consider the following 389-residue polypeptide: S-adenosylmethionine synthase (389 aa).

ATP is bound at residue His15. Asp17 serves as a coordination point for Mg(2+). Glu43 serves as a coordination point for K(+). L-methionine-binding residues include Glu56 and Gln99. Residues 99-109 form a flexible loop region; it reads QSPDIAQGVNE. ATP contacts are provided by residues 166 to 168, 234 to 235, Asp243, 249 to 250, Ala266, and Lys270; these read DAK, RF, and RK. Asp243 contributes to the L-methionine binding site. Lys274 lines the L-methionine pocket.

Belongs to the AdoMet synthase family. As to quaternary structure, homotetramer; dimer of dimers. Mg(2+) serves as cofactor. K(+) is required as a cofactor.

It localises to the cytoplasm. The enzyme catalyses L-methionine + ATP + H2O = S-adenosyl-L-methionine + phosphate + diphosphate. The protein operates within amino-acid biosynthesis; S-adenosyl-L-methionine biosynthesis; S-adenosyl-L-methionine from L-methionine: step 1/1. Its function is as follows. Catalyzes the formation of S-adenosylmethionine (AdoMet) from methionine and ATP. The overall synthetic reaction is composed of two sequential steps, AdoMet formation and the subsequent tripolyphosphate hydrolysis which occurs prior to release of AdoMet from the enzyme. The protein is S-adenosylmethionine synthase of Neisseria gonorrhoeae (strain NCCP11945).